Reading from the N-terminus, the 180-residue chain is Adenine phosphoribosyltransferase (180 aa).

Belongs to the purine/pyrimidine phosphoribosyltransferase family. As to quaternary structure, homodimer.

The protein resides in the cytoplasm. The catalysed reaction is AMP + diphosphate = 5-phospho-alpha-D-ribose 1-diphosphate + adenine. It functions in the pathway purine metabolism; AMP biosynthesis via salvage pathway; AMP from adenine: step 1/1. Functionally, catalyzes a salvage reaction resulting in the formation of AMP, that is energically less costly than de novo synthesis. This Haemophilus influenzae (strain PittEE) protein is Adenine phosphoribosyltransferase.